Reading from the N-terminus, the 322-residue chain is Ribosomal RNA small subunit methyltransferase H (322 aa).

S-adenosyl-L-methionine is bound by residues 40-42 (GGH), aspartate 60, phenylalanine 84, aspartate 106, and glutamine 113.

It belongs to the methyltransferase superfamily. RsmH family.

It localises to the cytoplasm. The catalysed reaction is cytidine(1402) in 16S rRNA + S-adenosyl-L-methionine = N(4)-methylcytidine(1402) in 16S rRNA + S-adenosyl-L-homocysteine + H(+). Its function is as follows. Specifically methylates the N4 position of cytidine in position 1402 (C1402) of 16S rRNA. The sequence is that of Ribosomal RNA small subunit methyltransferase H from Mannheimia succiniciproducens (strain KCTC 0769BP / MBEL55E).